The following is a 79-amino-acid chain: Sulfur carrier protein TusA (79 aa).

The active-site Cysteine persulfide intermediate is the Cys-17.

The protein belongs to the sulfur carrier protein TusA family.

It localises to the cytoplasm. Functionally, sulfur carrier protein which probably makes part of a sulfur-relay system. The protein is Sulfur carrier protein TusA of Histophilus somni (strain 129Pt) (Haemophilus somnus).